A 554-amino-acid polypeptide reads, in one-letter code: Solute carrier family 22 member 1 (554 aa).

The Cytoplasmic portion of the chain corresponds to Met1–Thr21. A helical membrane pass occupies residues Phe22 to Leu42. The Extracellular portion of the chain corresponds to Gly43–Asp149. Asn71 is a glycosylation site (N-linked (GlcNAc...) asparagine). The chain crosses the membrane as a helical span at residues Leu150 to Ala170. Over Asp171–Lys176 the chain is Cytoplasmic. Residues Leu177–Pro197 traverse the membrane as a helical segment. The Extracellular segment spans residues Asp198–Arg206. A helical transmembrane segment spans residues Leu207–Gly229. Residues Ser230 to Ala237 are Cytoplasmic-facing. Residues Ile238 to Ile258 form a helical membrane-spanning segment. Residues Pro259 to Arg262 are Extracellular-facing. A helical membrane pass occupies residues Trp263–Pro283. The Proline-rich sequence motif lies at Pro283–Arg287. Residues Glu284–Thr347 lie on the Cytoplasmic side of the membrane. Position 333 is a phosphoserine (Ser333). The helical transmembrane segment at Phe348–Met368 threads the bilayer. Topologically, residues Gly369–Asn374 are extracellular. A helical transmembrane segment spans residues Val375 to Val395. The Cytoplasmic portion of the chain corresponds to Thr396–Arg402. The chain crosses the membrane as a helical span at residues Ile403–Val423. At Pro424–Thr431 the chain is on the extracellular side. A helical transmembrane segment spans residues Ile432–Val452. At Asn453–Leu464 the chain is on the cytoplasmic side. Residues Gly465–Phe485 form a helical membrane-spanning segment. Residues Arg486–Gln492 lie on the Extracellular side of the membrane. The helical transmembrane segment at Pro493–Leu513 threads the bilayer. Residues Pro514–Pro554 lie on the Cytoplasmic side of the membrane.

It belongs to the major facilitator (TC 2.A.1) superfamily. Organic cation transporter (TC 2.A.1.19) family. In terms of processing, phosphorylated. As to expression, expressed in kidney, liver and intestine.

Its subcellular location is the basolateral cell membrane. It is found in the apical cell membrane. The protein localises to the lateral cell membrane. It localises to the basal cell membrane. The enzyme catalyses 1-methylnicotinamide(out) = 1-methylnicotinamide(in). It catalyses the reaction dopamine(out) = dopamine(in). It carries out the reaction serotonin(out) = serotonin(in). The catalysed reaction is (R)-adrenaline(out) = (R)-adrenaline(in). The enzyme catalyses (R)-noradrenaline(out) = (R)-noradrenaline(in). It catalyses the reaction histamine(out) = histamine(in). It carries out the reaction guanidine(out) = guanidine(in). The catalysed reaction is choline(out) = choline(in). The enzyme catalyses acetylcholine(in) = acetylcholine(out). It catalyses the reaction thiamine(in) = thiamine(out). It carries out the reaction spermidine(in) = spermidine(out). The catalysed reaction is agmatine(out) = agmatine(in). The enzyme catalyses putrescine(out) = putrescine(in). It catalyses the reaction (R)-carnitine(in) = (R)-carnitine(out). It carries out the reaction O-isobutanoyl-(R)-carnitine(in) = O-isobutanoyl-(R)-carnitine(out). The catalysed reaction is O-acetyl-(R)-carnitine(in) = O-acetyl-(R)-carnitine(out). The enzyme catalyses O-3-hydroxybutanoyl-(R)-carnitine(in) = O-3-hydroxybutanoyl-(R)-carnitine(out). It catalyses the reaction O-propanoyl-(R)-carnitine(in) = O-propanoyl-(R)-carnitine(out). It carries out the reaction O-butanoyl-(R)-carnitine(in) = O-butanoyl-(R)-carnitine(out). The catalysed reaction is O-2-methylbutanoyl-(R)-carnitine(in) = O-2-methylbutanoyl-(R)-carnitine(out). The enzyme catalyses O-3-methylbutanoyl-(R)-carnitine(in) = O-3-methylbutanoyl-(R)-carnitine(out). It catalyses the reaction O-hexanoyl-(R)-carnitine(in) = O-hexanoyl-(R)-carnitine(out). It carries out the reaction L-histidyl-L-proline diketopiperazine(in) = L-histidyl-L-proline diketopiperazine(out). The catalysed reaction is (R)-salsolinol(in) = (R)-salsolinol(out). The enzyme catalyses prostaglandin F2alpha(out) = prostaglandin F2alpha(in). It catalyses the reaction prostaglandin E2(out) = prostaglandin E2(in). Its activity is regulated as follows. Phosphorylation of the transporter leads to changes in its substrate affinity, resulting in a regulation of the transport activity. In contrast with rat ortholog, ASP uptake is inhibited by protein kinase A (PKA) and C (PKC) activation. ASP uptake is also endogenously activated by calmodulin, the calmodulin-dependent kinase II and LCK tyrosine kinase. Inhibited by cGMP, most likely through a cGMP-binding protein that interacts with OCT1. Functionally, electrogenic voltage-dependent transporter that mediates the transport of a variety of organic cations such as endogenous bioactive amines, cationic drugs and xenobiotics. Functions as a pH- and Na(+)-independent, bidirectional transporter. Cation cellular uptake or release is driven by the electrochemical potential (i.e. membrane potential and concentration gradient) and substrate selectivity. Hydrophobicity is a major requirement for recognition in polyvalent substrates and inhibitors. Primarily expressed in the basolateral membrane of hepatocytes and proximal tubules and involved in the uptake and disposition of cationic compounds from the blood by hepatic and renal clearance. Most likely functions as an uptake carrier in enterocytes contributing to the intestinal elimination of organic cations from the systemic circulation. Transports endogenous monoamines such as N-1-methylnicotinamide (NMN), guanidine, neurotransmitters dopamine, serotonin, noradrenaline, adrenaline and histamine, and quaternary ammonium compound such as choline. Also transports natural polyamines such as spermidine, agmatine and putrescine at low affinity, but relatively high turnover. Involved in the hepatic and intestinal uptake of the vitamin B1/thiamine, hence regulating hepatic lipid and energy metabolism. Contributes to the influx and efflux of fatty acid carriers carnitines and acylcarnitines across the basolateral membrane of hepatocytes, from the liver to the systemic circulation and inversely and may be involved in regulating the systemic availability of hepatic acylcarnitines. Also capable of transporting non-amine endogenous compounds such as prostaglandin E2 (PGE2) and prostaglandin F2-alpha (PGF2-alpha). May contribute to the transport of cationic compounds in testes across the blood-testis-barrier. Also mediates the uptake of xenobiotics tributylmethylammonium (TBuMA), quinidine, N-methyl-quinine (NMQ), N-methyl-quinidine (NMQD) N-(4,4-azo-n-pentyl)-quinuclidine (APQ), azidoprocainamide methoiodide (AMP), N-(4,4-azo-n-pentyl)-21-deoxyajmalinium (APDA) and 4-(4-(dimethylamino)styryl)-N-methylpyridinium (ASP). This is Solute carrier family 22 member 1 (SLC22A1) from Oryctolagus cuniculus (Rabbit).